We begin with the raw amino-acid sequence, 350 residues long: Transmembrane protein 185B (350 aa).

7 helical membrane-spanning segments follow: residues 16–36 (LIYT…DGII), 41–61 (WAVF…ASVG), 81–101 (FKAM…EVLV), 111–131 (FWLL…AACV), 168–188 (WLVV…VVLY), 211–231 (VTMA…EVLL), and 240–260 (TFSY…LMAT).

The protein belongs to the TMEM185 family.

It localises to the membrane. The sequence is that of Transmembrane protein 185B (TMEM185B) from Homo sapiens (Human).